Consider the following 381-residue polypeptide: Creatine kinase M-type (381 aa).

Residues 11 to 98 (KLNYKSEEEY…FDPIIQDRHG (88 aa)) enclose the Phosphagen kinase N-terminal domain. The region spanning 125-367 (YVLSSRVRTG…KLMVEMEKKL (243 aa)) is the Phosphagen kinase C-terminal domain. 128-132 (SSRVR) is a binding site for ATP. Phosphoserine is present on serine 164. At threonine 166 the chain carries Phosphothreonine. Phosphoserine is present on serine 178. Threonine 180 bears the Phosphothreonine mark. An ATP-binding site is contributed by histidine 191. Serine 199 carries the phosphoserine modification. ATP contacts are provided by arginine 236 and arginine 292. 2 positions are modified to phosphothreonine: threonine 313 and threonine 322. 320–325 (RGTGGV) is a binding site for ATP. Position 372 is a phosphoserine (serine 372).

The protein belongs to the ATP:guanido phosphotransferase family. Dimer of identical or non-identical chains, which can be either B (brain type) or M (muscle type). With MM being the major form in skeletal muscle and myocardium, MB existing in myocardium, and BB existing in many tissues, especially brain.

It carries out the reaction creatine + ATP = N-phosphocreatine + ADP + H(+). In terms of biological role, reversibly catalyzes the transfer of phosphate between ATP and various phosphogens (e.g. creatine phosphate). Creatine kinase isoenzymes play a central role in energy transduction in tissues with large, fluctuating energy demands, such as skeletal muscle, heart, brain and spermatozoa. In Oryctolagus cuniculus (Rabbit), this protein is Creatine kinase M-type (CKM).